Consider the following 509-residue polypeptide: ATP synthase subunit alpha (509 aa).

169–176 provides a ligand contact to ATP; that stretch reads GDRQTGKT.

Belongs to the ATPase alpha/beta chains family. F-type ATPases have 2 components, CF(1) - the catalytic core - and CF(0) - the membrane proton channel. CF(1) has five subunits: alpha(3), beta(3), gamma(1), delta(1), epsilon(1). CF(0) has three main subunits: a(1), b(2) and c(9-12). The alpha and beta chains form an alternating ring which encloses part of the gamma chain. CF(1) is attached to CF(0) by a central stalk formed by the gamma and epsilon chains, while a peripheral stalk is formed by the delta and b chains.

The protein localises to the cell inner membrane. The catalysed reaction is ATP + H2O + 4 H(+)(in) = ADP + phosphate + 5 H(+)(out). Its function is as follows. Produces ATP from ADP in the presence of a proton gradient across the membrane. The alpha chain is a regulatory subunit. In Parvibaculum lavamentivorans (strain DS-1 / DSM 13023 / NCIMB 13966), this protein is ATP synthase subunit alpha.